The primary structure comprises 616 residues: MMTDNRNTILAVILSGLVLIAWQYFYNVPAMEKQRAQQQAQAELQKTTPQPTASATPGATPQSGGAAQPSTPAAGQQAQPVVARDAAIAASPRVKIDTPRIAGSISLKGGRIDDVALVQYRETVDPKSPPIVLYSPSGTAEPYYAEFGWVPATGVTAKLPDAQTLWQQDGSGSLTPTTPAVLKWDNGEGLTFRRTISVDDHYLFTIKDEVSNVGNAPVTLYPFALISRHGTPQVSGYYILHEGLIGYLDGLQEYAYKKIDEAKSVNFKATNGWLGMTDKYWASALLPDTSAQLQARFSSNPVGNVHTYQTDYLLDPVTVAIGGSATANARLFAGAKEAGVVGINFPLAGHGGYNKELNLNHFDLLIDWGWFYFITKPMFLGLDFFYRFFGNFGISILLVTVIVKLLFFPLANKSYASMAKMKSIQPQLQALKERYPDDKVKQQQEMMEIYRKEKINPVAGCLPVVIQIPVFFSLYKVLFVTIEMRQAPFYGWIKDLSAPDPTNLFNLFGLIPLDPTTIPVFGHYLALGIWPIIMGITMWFQMKLNPTPPDPTQQMIFNWMPLIFTFMLAGFPAGLVIYWAWNNTLSVLQQSFIMRRNGVKVELFDNLKATFARKAT.

The helical transmembrane segment at 9–29 (ILAVILSGLVLIAWQYFYNVP) threads the bilayer. The segment at 37 to 80 (QQQAQAELQKTTPQPTASATPGATPQSGGAAQPSTPAAGQQAQP) is disordered. Polar residues predominate over residues 44-71 (LQKTTPQPTASATPGATPQSGGAAQPST). 4 helical membrane passes run 388–408 (FFGNFGISILLVTVIVKLLFF), 462–482 (LPVVIQIPVFFSLYKVLFVTI), 520–540 (VFGHYLALGIWPIIMGITMWF), and 559–579 (WMPLIFTFMLAGFPAGLVIYW).

This sequence belongs to the OXA1/ALB3/YidC family. Type 1 subfamily. In terms of assembly, interacts with the Sec translocase complex via SecD. Specifically interacts with transmembrane segments of nascent integral membrane proteins during membrane integration.

It is found in the cell inner membrane. Its function is as follows. Required for the insertion and/or proper folding and/or complex formation of integral membrane proteins into the membrane. Involved in integration of membrane proteins that insert both dependently and independently of the Sec translocase complex, as well as at least some lipoproteins. Aids folding of multispanning membrane proteins. The protein is Membrane protein insertase YidC of Bradyrhizobium diazoefficiens (strain JCM 10833 / BCRC 13528 / IAM 13628 / NBRC 14792 / USDA 110).